The primary structure comprises 579 residues: Polyadenylate-binding protein, cytoplasmic and nuclear (579 aa).

The span at 1 to 10 shows a compositional bias: basic and acidic residues; the sequence is MADITEKTAE. The disordered stretch occupies residues 1-32; it reads MADITEKTAEQLENLSLQDKQEGTNEENQSET. 4 RRM domains span residues 35–113, 123–200, 216–293, and 319–396; these read ASLY…WSQR, GNIF…PHLS, TNVY…RAQK, and INLF…IAQR. The PABC domain maps to 487–566; that stretch reads GFARNGPAAN…ASAAYESFKQ (80 aa). The tract at residues 560–579 is disordered; it reads AYESFKQEQQQPQGEEAQQA. Over residues 566-579 the composition is skewed to low complexity; it reads QEQQQPQGEEAQQA.

It belongs to the polyadenylate-binding protein type-1 family.

It is found in the cytoplasm. The protein resides in the nucleus. Functionally, binds the poly(A) tail of mRNA. Appears to be an important mediator of the multiple roles of the poly(A) tail in mRNA biogenesis, stability and translation. In the nucleus, involved in both mRNA cleavage and polyadenylation. Is also required for efficient mRNA export to the cytoplasm. Acts in concert with a poly(A)-specific nuclease (PAN) to affect poly(A) tail shortening, which may occur concomitantly with either nucleocytoplasmic mRNA transport or translational initiation. In the cytoplasm, stimulates translation initiation and regulates mRNA decay through translation termination-coupled poly(A) shortening, probably mediated by PAN. The chain is Polyadenylate-binding protein, cytoplasmic and nuclear (PAB1) from Candida glabrata (strain ATCC 2001 / BCRC 20586 / JCM 3761 / NBRC 0622 / NRRL Y-65 / CBS 138) (Yeast).